Reading from the N-terminus, the 112-residue chain is Probable fatty acid-binding protein (112 aa).

It belongs to the calycin superfamily. Fatty-acid binding protein (FABP) family.

This is Probable fatty acid-binding protein from Anopheles gambiae (African malaria mosquito).